A 295-amino-acid polypeptide reads, in one-letter code: Phosphatidylglycerol--prolipoprotein diacylglyceryl transferase (295 aa).

7 helical membrane-spanning segments follow: residues 17 to 37, 57 to 77, 92 to 112, 127 to 147, 196 to 216, 222 to 242, and 255 to 275; these read IKVHWYGIMYLLGFTAAWLLG, LLFYAMLGVVLGGRIGYMLFY, VWDGGMSFHGGLLGVIAACWW, FMAPLVPLGLGFGRIGNFIGA, QLYEALLEGLVMFVVLWAVSA, YLVGGLFALMYGLFRFAVEFV, and WLTRGQILSLPLIAFGLVLLV. An a 1,2-diacyl-sn-glycero-3-phospho-(1'-sn-glycerol)-binding site is contributed by R140.

The protein belongs to the Lgt family.

Its subcellular location is the cell inner membrane. The catalysed reaction is L-cysteinyl-[prolipoprotein] + a 1,2-diacyl-sn-glycero-3-phospho-(1'-sn-glycerol) = an S-1,2-diacyl-sn-glyceryl-L-cysteinyl-[prolipoprotein] + sn-glycerol 1-phosphate + H(+). It participates in protein modification; lipoprotein biosynthesis (diacylglyceryl transfer). Its function is as follows. Catalyzes the transfer of the diacylglyceryl group from phosphatidylglycerol to the sulfhydryl group of the N-terminal cysteine of a prolipoprotein, the first step in the formation of mature lipoproteins. This chain is Phosphatidylglycerol--prolipoprotein diacylglyceryl transferase, found in Stenotrophomonas maltophilia (strain R551-3).